A 70-amino-acid chain; its full sequence is Myotoxin (70 aa).

A signal peptide spans 1 to 22 (MKILYLLFAFLFLAFLSEPGNA). Disulfide bonds link cysteine 26/cysteine 58, cysteine 33/cysteine 52, and cysteine 40/cysteine 59.

Belongs to the crotamine-myotoxin family. Monomer. In terms of tissue distribution, expressed by the venom gland.

The protein localises to the secreted. Its function is as follows. Cationic peptide that possesses multiple functions. It acts as a cell-penetrating peptide (CPP), and as a potent voltage-gated potassium channel (Kv) inhibitor. It exhibits antimicrobial activities, hind limb paralysis, and severe muscle necrosis by a non-enzymatic mechanism. This chain is Myotoxin, found in Crotalus helleri (Southern pacific rattlesnake).